Consider the following 126-residue polypeptide: 5-hydroxyisourate hydrolase (126 aa).

Substrate-binding residues include His16, Arg54, and Tyr123.

Belongs to the transthyretin family. 5-hydroxyisourate hydrolase subfamily. Homotetramer.

It catalyses the reaction 5-hydroxyisourate + H2O = 5-hydroxy-2-oxo-4-ureido-2,5-dihydro-1H-imidazole-5-carboxylate + H(+). Functionally, catalyzes the hydrolysis of 5-hydroxyisourate (HIU) to 2-oxo-4-hydroxy-4-carboxy-5-ureidoimidazoline (OHCU). The chain is 5-hydroxyisourate hydrolase from Pseudomonas aeruginosa (strain ATCC 15692 / DSM 22644 / CIP 104116 / JCM 14847 / LMG 12228 / 1C / PRS 101 / PAO1).